A 383-amino-acid polypeptide reads, in one-letter code: MKNKLPPFIEIYRALIATPSISATEEALDQSNADLITLLADWFKDLGFNVEVQPVPGTRNKFNMLASCGQGAGGLLLAGHTDTVPFDDGRWTRDPFTLTEHDGKLYGLGTADMKGFFAFILDALRDVDVTKLAKPLYILATADEETSMAGARYFAETTALRPDCAIIGEPTSLQPVRAHKGHISNAIRIQGQSGHSSDPARGVNAIELMHDAIGHILQLRDNLKERYHYDAFTVPYPTLNLGHIHGGDASNRICACCELHMDIRPLPGMTLNELNGLLNDALAPVSERWPGRLTVDELHPPIPGYECPPNHQLVEVVEKLLGAKTEVVNYCTEAPFIQTLCPTLVLGPGSINQAHQPDEYLETRFIKPTRELITQVIHHFCWH.

H80 lines the Zn(2+) pocket. The active site involves D82. D112 contributes to the Zn(2+) binding site. Residue E144 is part of the active site. Residues E145, E169, and H355 each contribute to the Zn(2+) site.

It belongs to the peptidase M20A family. ArgE subfamily. Homodimer. The cofactor is Zn(2+). Requires Co(2+) as cofactor. Glutathione serves as cofactor.

It localises to the cytoplasm. The enzyme catalyses N(2)-acetyl-L-ornithine + H2O = L-ornithine + acetate. Its pathway is amino-acid biosynthesis; L-arginine biosynthesis; L-ornithine from N(2)-acetyl-L-ornithine (linear): step 1/1. Its function is as follows. Catalyzes the hydrolysis of the amide bond of N(2)-acetylated L-amino acids. Cleaves the acetyl group from N-acetyl-L-ornithine to form L-ornithine, an intermediate in L-arginine biosynthesis pathway, and a branchpoint in the synthesis of polyamines. The sequence is that of Acetylornithine deacetylase from Escherichia coli O45:K1 (strain S88 / ExPEC).